A 629-amino-acid chain; its full sequence is Histone-lysine N-methyltransferase set9 (629 aa).

The 115-residue stretch at C120 to G234 folds into the SET domain. Polar residues-rich tracts occupy residues S264–A274, E338–D350, N359–A376, and E390–P400. Disordered stretches follow at residues S264 to P400 and V586 to M629. The segment covering S597–N614 has biased composition (basic and acidic residues).

Belongs to the class V-like SAM-binding methyltransferase superfamily. Histone-lysine methyltransferase family. Suvar4-20 subfamily.

The protein localises to the nucleus. Its subcellular location is the chromosome. It carries out the reaction L-lysyl(20)-[histone H4] + 3 S-adenosyl-L-methionine = N(6),N(6),N(6)-trimethyl-L-lysyl(20)-[histone H4] + 3 S-adenosyl-L-homocysteine + 3 H(+). Functionally, histone methyltransferase that trimethylates 'Lys-20' of histone H4 to form H4K20me3. This is Histone-lysine N-methyltransferase set9 (set9) from Aspergillus terreus (strain NIH 2624 / FGSC A1156).